The chain runs to 482 residues: Probable glycine dehydrogenase (decarboxylating) subunit 2 (482 aa).

Position 264 is an N6-(pyridoxal phosphate)lysine (Lys-264).

The protein belongs to the GcvP family. C-terminal subunit subfamily. As to quaternary structure, the glycine cleavage system is composed of four proteins: P, T, L and H. In this organism, the P 'protein' is a heterodimer of two subunits. Pyridoxal 5'-phosphate serves as cofactor.

It catalyses the reaction N(6)-[(R)-lipoyl]-L-lysyl-[glycine-cleavage complex H protein] + glycine + H(+) = N(6)-[(R)-S(8)-aminomethyldihydrolipoyl]-L-lysyl-[glycine-cleavage complex H protein] + CO2. In terms of biological role, the glycine cleavage system catalyzes the degradation of glycine. The P protein binds the alpha-amino group of glycine through its pyridoxal phosphate cofactor; CO(2) is released and the remaining methylamine moiety is then transferred to the lipoamide cofactor of the H protein. The sequence is that of Probable glycine dehydrogenase (decarboxylating) subunit 2 from Treponema denticola (strain ATCC 35405 / DSM 14222 / CIP 103919 / JCM 8153 / KCTC 15104).